The following is a 223-amino-acid chain: Putative germin-like protein 2-3 (223 aa).

An N-terminal signal peptide occupies residues 1-28 (MAAIRASFLLAAAALLALWCSDHGGVVA). An intrachain disulfide couples cysteine 38 to cysteine 53. Residues 67–217 (SGLHMAGNTT…AFQVEKTVVD (151 aa)) enclose the Cupin type-1 domain. A glycan (N-linked (GlcNAc...) asparagine) is linked at asparagine 74. Mn(2+) is bound by residues histidine 115, histidine 117, glutamate 122, and histidine 163.

This sequence belongs to the germin family. In terms of assembly, oligomer (believed to be a pentamer but probably hexamer).

It localises to the secreted. The protein resides in the extracellular space. It is found in the apoplast. May play a role in plant defense. Probably has no oxalate oxidase activity even if the active site is conserved. The protein is Putative germin-like protein 2-3 of Oryza sativa subsp. japonica (Rice).